The following is a 715-amino-acid chain: MLKKVFETTNLKDSFQVEIGTYARNVDASILVRYQDTVVLTTTVFSRKPNNLDFLPLTVIYQEKLYAAGKIPGSFLRREGRSNDHEILTSRLIDRSLRPLFPDYFQQEVQVINTVLSLDPDFKSELASMLGSSLSLLISEIPFFEAISGVYVGKINDKFIINPTLQQLANSTLHLMVAGTKHNVTMIEAHANEVSEQDFLEAINFAHQYIKKLCLFQENIKQQFAPAKITNTLHQTEQTQQQAFFAKHQSQVKQAILSCNSKNDLQQLKEQILDQAKQTPFFKTIDTATVFDYEAHKKHLQTTETLFQKLSKQETRSLILQEKIRPDKRGLEEIRTLESQIDLLPRAHGSALFTRGQTQSLAAVTLGCLSESKIIDGLSDEQNKRFMLHYNFPPFSVGAVGRYTAPSRREIGHGTLAEKAISQVLPEEKDFPYTIRVVSEILESNGSSSQATVCASSLALMASGVPLKKAVAGMSVGLVFDQATNKYVILSDIQGLEDHVGDMDLKIAGTNKGITALQMDLKIQGIHFKILQEAFLQAKKGRLHILEHMSQTISQPRLEVSKYAPKVCMMQIKPEKIRDIIGSGGKIINQIIESHDGVKIDIEQDGRVFVMHSNLETVKKTVAFIESLIQEIQIGTCYQASILRFLSDKQGKMIGAVAQVCPGIEGLIHVNQKKFQKITDVLKIGETVSVKCTKINDRGRIDFLLLPKNTQEKNS.

Mg(2+) is bound by residues Asp498 and Asp504. A KH domain is found at 565–625 (PKVCMMQIKP…ETVKKTVAFI (61 aa)). In terms of domain architecture, S1 motif spans 635-706 (GTCYQASILR…DRGRIDFLLL (72 aa)).

It belongs to the polyribonucleotide nucleotidyltransferase family. Requires Mg(2+) as cofactor.

It is found in the cytoplasm. The enzyme catalyses RNA(n+1) + phosphate = RNA(n) + a ribonucleoside 5'-diphosphate. In terms of biological role, involved in mRNA degradation. Catalyzes the phosphorolysis of single-stranded polyribonucleotides processively in the 3'- to 5'-direction. This is Polyribonucleotide nucleotidyltransferase from Onion yellows phytoplasma (strain OY-M).